A 303-amino-acid polypeptide reads, in one-letter code: MQKFDTRTFQGLILTLQDYWARQGCTIVQPLDMEVGAGTSHPMTCLRALGPEPMATAYVQPSRRPTDGRYGENPNRLQHYYQFQVVIKPSPENIQELYLGSLKELGMDPTIHDIRFVEDNWENPTLGAWGLGWEVWLNGMEVTQFTYFQQVGGLECKPVTGEITYGLERLAMYIQGVDSVYDLVWSDGPLGKTTYGDVFHQNEVEQSTYNFEYADVDFLFTCFEQYEKEAQQLLALENPLPLPAYERILKAAHSFNLLDARKAISVTERQRYILRIRTLTKAVAEAYYASREALGFPMCNKEK.

It belongs to the class-II aminoacyl-tRNA synthetase family. In terms of assembly, tetramer of two alpha and two beta subunits.

Its subcellular location is the cytoplasm. It carries out the reaction tRNA(Gly) + glycine + ATP = glycyl-tRNA(Gly) + AMP + diphosphate. The protein is Glycine--tRNA ligase alpha subunit of Salmonella arizonae (strain ATCC BAA-731 / CDC346-86 / RSK2980).